The chain runs to 1038 residues: Protein transport protein SEC24 A (1038 aa).

The segment at Met-1–Arg-247 is disordered. Over residues Ser-22 to Gly-33 the composition is skewed to pro residues. Residues Cys-371, Cys-374, Cys-393, and Cys-396 each contribute to the Zn(2+) site. The segment at Cys-371 to Cys-396 is zinc finger-like.

It belongs to the SEC23/SEC24 family. SEC24 subfamily. As to quaternary structure, component of the coat protein complex II (COPII), composed of at least five proteins: the Sec23/24 complex, the Sec13/31 complex and Sar1. Interacts with SEC221, SEC23E/SEC23A, SEC23B, SEC23G/SEC23C and SEC23F/SEC23D. (Microbial infection) Interacts with turnip mosaic virus (TuMV) 6K2 in COPII-coated vesicles. As to expression, mainly expressed in pollen, leaves, inflorescences, roots and stems, and, to a lower extent, in cotyledons, petioles and hypocotyls.

The protein resides in the cytoplasmic vesicle. It is found in the COPII-coated vesicle membrane. Its subcellular location is the endoplasmic reticulum membrane. It localises to the golgi apparatus membrane. The protein localises to the cytoplasm. The protein resides in the cytosol. In terms of biological role, essential protein. Component of the coat protein complex II (COPII), that covers ER-derived vesicles involved in transport from the endoplasmic reticulum to the Golgi apparatus. COPII is composed of at least five proteins: the SEC23/24 complex, the SEC13/31 complex, and the protein SAR1. Acts in the cytoplasm to promote the transport of secretory, plasma membrane, and vacuolar proteins from the endoplasmic reticulum to the Golgi complex. Involved in maintaining the dynamic identity of organelles of the early secretory pathway. Regulates cell size patterning, and prevents CDKA;1-, DEK1- and ACR4-dependent endoreduplication and giant cells formation in sepals. Required for male gametophytes (pollen grains) development and transmission. Its function is as follows. (Microbial infection) Contributes to viral systemic infection of turnip mosaic virus (TuMV) by triggering the formation of host endoplasmic reticulum (ER)-derived viral vesicles that carry the viral RNA (vRNA) to plasmodesmata for cell-to-cell viral movement. In Arabidopsis thaliana (Mouse-ear cress), this protein is Protein transport protein SEC24 A.